Reading from the N-terminus, the 66-residue chain is Large ribosomal subunit protein bL33c (66 aa).

It belongs to the bacterial ribosomal protein bL33 family.

The protein resides in the plastid. It localises to the chloroplast. The polypeptide is Large ribosomal subunit protein bL33c (Chloranthus spicatus (Chulantree)).